A 591-amino-acid chain; its full sequence is Melatonin-related receptor (591 aa).

Topologically, residues 1 to 38 are extracellular; it reads MATVPKSNMGPTKAVPTPFGCIGCKLPKPDYPPALIIF. Residues 39-59 form a helical membrane-spanning segment; it reads MFCAMVITVVVDLIGNSMVIL. Residues 60 to 72 lie on the Cytoplasmic side of the membrane; the sequence is AVTKNKKLRNSGN. Residues 73-93 form a helical membrane-spanning segment; that stretch reads IFVASLSVADMLVAIYPYPLM. The Extracellular segment spans residues 94–111; the sequence is LYAMSVGGWDLSQLQCQM. Cysteine 109 and cysteine 186 are joined by a disulfide. The helical transmembrane segment at 112–132 threads the bilayer; the sequence is VGLVTGLSVVGSIFNITAIAI. Residues 133–151 are Cytoplasmic-facing; sequence NRYCYICHSLQYKRIFSLR. A helical transmembrane segment spans residues 152–172; that stretch reads NTCIYLVVTWVMTVLAVLPNM. At 173 to 196 the chain is on the extracellular side; it reads YIGTIEYDPRTYTCIFNYVNNPAF. The helical transmembrane segment at 197–217 threads the bilayer; the sequence is TVTIVCIHFVLPLIIVGYCYT. Residues 218–247 are Cytoplasmic-facing; sequence KIWIKVLAARDPAGQNPDNQFAEVRNFLTM. A helical membrane pass occupies residues 248-268; the sequence is FVIFLLFAVCWCPVNVLTVLV. Topologically, residues 269-281 are extracellular; sequence AVIPKEMAGKIPN. The chain crosses the membrane as a helical span at residues 282-302; sequence WLYLAAYCIAYFNSCLNAIIY. Over 303 to 591 the chain is Cytoplasmic; it reads GILNESFRRE…DSDCSDEMAV (289 aa). The disordered stretch occupies residues 378-427; it reads LPGDASAPHSDRASVRPKPQTRSTSVYRKPASIHHKSISGHPKSASVYPK.

The protein belongs to the G-protein coupled receptor 1 family. In terms of assembly, homodimer, and heterodimer with MTNR1A and MTNR1B. Interacts with KAT5. Interacts with RTN4 isoform A/NOGO-A. Interacts with TGFBR1. Strongly expressed in the brain with highly restricted pattern of expression, confined to a subset of the ependymal cells of the third ventricle and a population of cells in the dorsomedial hypothalamic nucleus.

Its subcellular location is the cell membrane. It is found in the postsynaptic density. In terms of biological role, g protein-coupled receptor that plays a role in numerous physiological processes including regulation of energy metabolism, neurite outgrowth or cell migration. Promotes self-renewal and neuronal differentiation of neural progenitor cells through activation of the NOTCH and WNT/beta-catenin signaling pathways. Modulates the KAT5-dependent glucocorticoid receptor signaling by modulating KAT5 subcellular compartmentalisation. Also plays a role in the activation TGFBR1 in the absence of TGFBR2 by interfering with FKBP1A binding to TGFBR1, leading to induction of both canonical and non-canonical SMAD signaling pathways resulting in inhibition of proliferation or promotion of migration. The protein is Melatonin-related receptor (Gpr50) of Mus musculus (Mouse).